We begin with the raw amino-acid sequence, 1028 residues long: Multidrug resistance protein MdtC (1028 aa).

The next 12 membrane-spanning stretches (helical) occupy residues Phe-3–Leu-23, Glu-333–Leu-353, Leu-360–Cys-380, Leu-387–Leu-407, Val-431–Leu-451, Phe-463–Pro-483, Leu-528–Pro-548, Val-853–Ser-873, Val-875–Leu-895, Leu-897–Val-917, Pro-953–Gly-973, and Ile-984–Val-1004.

This sequence belongs to the resistance-nodulation-cell division (RND) (TC 2.A.6) family. MdtC subfamily. In terms of assembly, part of a tripartite efflux system composed of MdtA, MdtB and MdtC. MdtC forms a heteromultimer with MdtB.

The protein resides in the cell inner membrane. The polypeptide is Multidrug resistance protein MdtC (Citrobacter koseri (strain ATCC BAA-895 / CDC 4225-83 / SGSC4696)).